Consider the following 369-residue polypeptide: MNFKVRVIDLAGSCCRLGALQFGTKVVETPGCLIYNRSGVVPHLTPDILETLDNVPPIMHTPLASIIEEPGLIKLRGYGKGLASFIGYKDNSVYISASDYQGEAMYQYNENKSISVWTKTGRTKVTPDDYSKFVEVCRPSWYQSLCDTVPANASIKRTRKSVDRTLEFLDQCLKYREKHDSLKTSELWAAVEGGGLVDERQRSAKESATRPVFGFTLEGFGSDQMNVETIFELLPLTTQNLPVEKPRLIHAIGSPTINSLSRSSKLTEVEEENGNDSSNDQDRTATFSLLNLREDRYNEDFSPLVSGCKCFVCSNHTRAYIHHLIINNEMLGGVLLMTHNLFQYIEFFRCIRTSLKNNKWKELRKLFDA.

The segment at 263–282 (SSKLTEVEEENGNDSSNDQD) is disordered. Residues C308, C310, C313, and H339 each contribute to the Zn(2+) site.

This sequence belongs to the queuine tRNA-ribosyltransferase family. QTRT2 subfamily. As to quaternary structure, heterodimer of a catalytic subunit and an accessory subunit. Zn(2+) is required as a cofactor.

It is found in the cytoplasm. In terms of biological role, non-catalytic subunit of the queuine tRNA-ribosyltransferase (TGT) that catalyzes the base-exchange of a guanine (G) residue with queuine (Q) at position 34 (anticodon wobble position) in tRNAs with GU(N) anticodons (tRNA-Asp, -Asn, -His and -Tyr), resulting in the hypermodified nucleoside queuosine (7-(((4,5-cis-dihydroxy-2-cyclopenten-1-yl)amino)methyl)-7-deazaguanosine). This chain is Queuine tRNA-ribosyltransferase accessory subunit 2, found in Trichoplax adhaerens (Trichoplax reptans).